The sequence spans 145 residues: Mannitol-specific phosphotransferase enzyme IIA component (145 aa).

One can recognise a PTS EIIA type-2 domain in the interval 4–143; it reads TILSTETIKV…QEVLAFLGEV (140 aa). His-64 serves as the catalytic Tele-phosphohistidine intermediate. His-64 bears the Phosphohistidine; by HPr mark.

Its subcellular location is the cytoplasm. Its function is as follows. The phosphoenolpyruvate-dependent sugar phosphotransferase system (sugar PTS), a major carbohydrate active transport system, catalyzes the phosphorylation of incoming sugar substrates concomitantly with their translocation across the cell membrane. The enzyme II CmtAB PTS system is involved in D-mannitol transport. In Halalkalibacterium halodurans (strain ATCC BAA-125 / DSM 18197 / FERM 7344 / JCM 9153 / C-125) (Bacillus halodurans), this protein is Mannitol-specific phosphotransferase enzyme IIA component (mtlF).